A 166-amino-acid chain; its full sequence is Large ribosomal subunit protein uL10 (166 aa).

Belongs to the universal ribosomal protein uL10 family. As to quaternary structure, part of the ribosomal stalk of the 50S ribosomal subunit. The N-terminus interacts with L11 and the large rRNA to form the base of the stalk. The C-terminus forms an elongated spine to which L12 dimers bind in a sequential fashion forming a multimeric L10(L12)X complex.

Functionally, forms part of the ribosomal stalk, playing a central role in the interaction of the ribosome with GTP-bound translation factors. The polypeptide is Large ribosomal subunit protein uL10 (Streptococcus agalactiae serotype V (strain ATCC BAA-611 / 2603 V/R)).